We begin with the raw amino-acid sequence, 432 residues long: Trigger factor (432 aa).

One can recognise a PPIase FKBP-type domain in the interval 161–246 (EDRVTLDFTG…LKKVEERELP (86 aa)).

The protein belongs to the FKBP-type PPIase family. Tig subfamily.

The protein localises to the cytoplasm. The catalysed reaction is [protein]-peptidylproline (omega=180) = [protein]-peptidylproline (omega=0). Functionally, involved in protein export. Acts as a chaperone by maintaining the newly synthesized protein in an open conformation. Functions as a peptidyl-prolyl cis-trans isomerase. In Salmonella arizonae (strain ATCC BAA-731 / CDC346-86 / RSK2980), this protein is Trigger factor.